The primary structure comprises 129 residues: Small ribosomal subunit protein uS11 (129 aa).

This sequence belongs to the universal ribosomal protein uS11 family. Part of the 30S ribosomal subunit. Interacts with proteins S7 and S18. Binds to IF-3.

Located on the platform of the 30S subunit, it bridges several disparate RNA helices of the 16S rRNA. Forms part of the Shine-Dalgarno cleft in the 70S ribosome. This chain is Small ribosomal subunit protein uS11, found in Dechloromonas aromatica (strain RCB).